Consider the following 238-residue polypeptide: MTLTTPLSITAIVPAAGVGSRMKADRPKQYLLLNGKTVLEHTIEQLLAFPLVNKVVVAITDGDPYFPELTLAHDSRVIRVSGGKERADSVLSGLSYVQEHQLSEWVMVHDAARPCIRHSDIDKLIAEVIPEHIGGILASPVRDTMKHATQEQCIETTIDRSVLWHALTPQLFTTELLFSALQTGLEQNLSITDESSAIELMGYQPKLVQGRADNLKITQPEDLDLAEFYLQKMKKETK.

This sequence belongs to the IspD/TarI cytidylyltransferase family. IspD subfamily.

The enzyme catalyses 2-C-methyl-D-erythritol 4-phosphate + CTP + H(+) = 4-CDP-2-C-methyl-D-erythritol + diphosphate. It functions in the pathway isoprenoid biosynthesis; isopentenyl diphosphate biosynthesis via DXP pathway; isopentenyl diphosphate from 1-deoxy-D-xylulose 5-phosphate: step 2/6. Its function is as follows. Catalyzes the formation of 4-diphosphocytidyl-2-C-methyl-D-erythritol from CTP and 2-C-methyl-D-erythritol 4-phosphate (MEP). In Aliivibrio fischeri (strain ATCC 700601 / ES114) (Vibrio fischeri), this protein is 2-C-methyl-D-erythritol 4-phosphate cytidylyltransferase.